The primary structure comprises 300 residues: Bifunctional protein FolD 2 (300 aa).

NADP(+) is bound by residues 165-167 (GRS), Ser190, and Ile231.

The protein belongs to the tetrahydrofolate dehydrogenase/cyclohydrolase family. Homodimer.

It carries out the reaction (6R)-5,10-methylene-5,6,7,8-tetrahydrofolate + NADP(+) = (6R)-5,10-methenyltetrahydrofolate + NADPH. It catalyses the reaction (6R)-5,10-methenyltetrahydrofolate + H2O = (6R)-10-formyltetrahydrofolate + H(+). The protein operates within one-carbon metabolism; tetrahydrofolate interconversion. Its function is as follows. Catalyzes the oxidation of 5,10-methylenetetrahydrofolate to 5,10-methenyltetrahydrofolate and then the hydrolysis of 5,10-methenyltetrahydrofolate to 10-formyltetrahydrofolate. This is Bifunctional protein FolD 2 from Pseudomonas syringae pv. tomato (strain ATCC BAA-871 / DC3000).